A 102-amino-acid polypeptide reads, in one-letter code: Small ribosomal subunit protein bS18 (102 aa).

It belongs to the bacterial ribosomal protein bS18 family. Part of the 30S ribosomal subunit. Forms a tight heterodimer with protein bS6.

In terms of biological role, binds as a heterodimer with protein bS6 to the central domain of the 16S rRNA, where it helps stabilize the platform of the 30S subunit. The chain is Small ribosomal subunit protein bS18 from Orientia tsutsugamushi (strain Ikeda) (Rickettsia tsutsugamushi).